The primary structure comprises 33 residues: Brevinin-2PTb (33 aa).

A disulfide bridge connects residues Cys27 and Cys33.

In terms of tissue distribution, expressed by the skin glands.

The protein localises to the secreted. Functionally, has antibacterial activity against the Gram-positive bacterium S.aureus ATCC 25923 (MIC=9 uM) and the Gram-negative bacterium E.coli ATCC 25726 (MIC=9 uM). The chain is Brevinin-2PTb from Pulchrana picturata (Malaysian fire frog).